The sequence spans 141 residues: Flagellar assembly factor FliW (141 aa).

This sequence belongs to the FliW family. As to quaternary structure, interacts with translational regulator CsrA and flagellin(s).

The protein localises to the cytoplasm. Acts as an anti-CsrA protein, binds CsrA and prevents it from repressing translation of its target genes, one of which is flagellin. Binds to flagellin and participates in the assembly of the flagellum. In Clostridium beijerinckii (strain ATCC 51743 / NCIMB 8052) (Clostridium acetobutylicum), this protein is Flagellar assembly factor FliW.